The primary structure comprises 510 residues: DNA-directed RNA polymerase I subunit RPA34 (510 aa).

Position 1 is an N-acetylmethionine (Met1). The segment at Met1–Ser31 is disordered. Ser27 carries the post-translational modification Phosphoserine. The residue at position 80 (Tyr80) is a Phosphotyrosine. Residues Gly120–Pro143 form a disordered region. A phosphoserine mark is found at Ser128, Ser136, Ser172, and Ser205. Over residues Gln131–Pro143 the composition is skewed to pro residues. The interval Leu203–Val510 is disordered. The segment covering Gly258–Lys270 has biased composition (basic and acidic residues). Residue Lys270 forms a Glycyl lysine isopeptide (Lys-Gly) (interchain with G-Cter in SUMO1); alternate linkage. A Glycyl lysine isopeptide (Lys-Gly) (interchain with G-Cter in SUMO2); alternate cross-link involves residue Lys270. A Phosphoserine modification is found at Ser285. Position 287 is a phosphothreonine (Thr287). Phosphoserine is present on Ser309. Residue Lys314 forms a Glycyl lysine isopeptide (Lys-Gly) (interchain with G-Cter in SUMO1); alternate linkage. A Glycyl lysine isopeptide (Lys-Gly) (interchain with G-Cter in SUMO2); alternate cross-link involves residue Lys314. 2 stretches are compositionally biased toward low complexity: residues Ala372–Ala382 and Asp394–Glu407. Residues Thr421–Arg430 are compositionally biased toward basic residues. Positions Glu436 to Glu452 are enriched in low complexity. The residue at position 490 (Ser490) is a Phosphoserine.

It belongs to the eukaryotic RPA34 RNA polymerase subunit family. As to quaternary structure, component of the RNA polymerase I (Pol I) complex consisting of 13 subunits: a ten-subunit catalytic core composed of POLR1A/RPA1, POLR1B/RPA2, POLR1C/RPAC1, POLR1D/RPAC2, POLR1H/RPA12, POLR2E/RPABC1, POLR2F/RPABC2, POLR2H/RPABC3, POLR2K/RPABC4 and POLR2L/RPABC5; a mobile stalk subunit POLR1F/RPA43 protruding from the core and additional subunits homologous to general transcription factors POLR1E/RPA49 and POLR1G/RPA34. Forms a heterodimer with POLR1E/RPA49. Part of Pol I pre-initiation complex (PIC), in which Pol I core assembles with RRN3 and promoter-bound UTBF and SL1/TIF-IB complex. Interacts with TAF1A thereby associates with the SL1/TIF-IB complex. Interacts with UBTF. Interacts with POLR1E/PRAF1 through its N-terminal region. Interacts with CD3E. In terms of processing, undergoes tyrosine phosphorylation upon T-cell receptor (TCR) stimulation. This phosphorylation has not been confirmed by other groups. Post-translationally, phosphorylated on tyrosine residues in initiation-competent Pol I-beta complexes but not in Pol I-alpha complexes.

The protein resides in the nucleus. The protein localises to the nucleolus. It is found in the chromosome. Component of RNA polymerase I (Pol I), a DNA-dependent RNA polymerase which synthesizes ribosomal RNA precursors using the four ribonucleoside triphosphates as substrates. Involved in UBTF-activated transcription, presumably at a step following PIC formation. Functionally, has been described as a component of preformed T-cell receptor (TCR) complex. This Homo sapiens (Human) protein is DNA-directed RNA polymerase I subunit RPA34.